The following is a 485-amino-acid chain: E3 ubiquitin-protein ligase RNF14 (485 aa).

The region spanning 11–137 (DELLALASIY…QFLKEETLTY (127 aa)) is the RWD domain. The D-box motif lies at 37–45 (RIYLDLPQN). Residues 217 to 458 (KLFLCSICFC…DSESPCFNRL (242 aa)) are TRIAD supradomain. Residues Cys221, Cys224, Cys239, His241, Cys244, Cys247, Cys266, Cys271, Cys310, Cys315, Cys330, Cys333, Cys338, Cys341, and His346 each coordinate Zn(2+). The segment at 221–271 (CSICFCEKLGSDCMYFLECKHVYCKACLKDYFEIQIKDGQVKCLNCPEPQC) adopts an RING-type 1 zinc-finger fold. The segment at 290–351 (ARYDRLLLQS…RLTYHGLSPC (62 aa)) adopts an IBR-type zinc-finger fold. Ser349 is modified (phosphoserine). 3 residues coordinate Zn(2+): Cys351, Cys405, and Cys408. Residues 405–434 (CPCCGTPIQKLDGCNKMTCTGCMQYFCWIC) form an RING-type 2; atypical zinc finger. The active site involves Cys418. Positions 423, 426, 431, 434, 446, and 454 each coordinate Zn(2+).

The protein belongs to the RBR family. RNF14 subfamily. In terms of assembly, interacts with GCN1; interaction takes place in response to ribosome collisions and is required for ubiquitination of EEF1A1/eEF1A. Interacts with the ubiquitin-conjugating enzymes UBE2E1 and UBE2E2. Interacts with AR/androgen receptor. Interacts with TCF7/TCF1, TCF7L1/TCF3 and TCF7L2/TCF4; promoting Wnt signaling. In terms of processing, RING-type zinc finger-dependent and UBE2E2-dependent autoubiquitination.

It is found in the cytoplasm. It localises to the nucleus. The catalysed reaction is [E2 ubiquitin-conjugating enzyme]-S-ubiquitinyl-L-cysteine + [acceptor protein]-L-lysine = [E2 ubiquitin-conjugating enzyme]-L-cysteine + [acceptor protein]-N(6)-ubiquitinyl-L-lysine.. The protein operates within protein modification; protein ubiquitination. In terms of biological role, E3 ubiquitin-protein ligase that plays a key role in the RNF14-RNF25 translation quality control pathway, a pathway that takes place when a ribosome has stalled during translation, and which promotes ubiquitination and degradation of translation factors on stalled ribosomes. Recruited to stalled ribosomes by the ribosome collision sensor GCN1 and mediates 'Lys-6'-linked ubiquitination of target proteins, leading to their degradation. Mediates ubiquitination of EEF1A1/eEF1A and ETF1/eRF1 translation factors on stalled ribosomes, leading to their degradation. Also catalyzes ubiquitination of ribosomal proteins RPL0, RPL1, RPL12, RPS13 and RPS17. Specifically required to resolve RNA-protein cross-links caused by reactive aldehydes, which trigger translation stress by stalling ribosomes: acts by catalying 'Lys-6'-linked ubiquitination of RNA-protein cross-links, leading to their removal by the ATP-dependent unfoldase VCP and subsequent degradation by the proteasome. Independently of its function in the response to stalled ribosomes, acts as a regulator of transcription in Wnt signaling via its interaction with TCF transcription factors (TCF7/TCF1, TCF7L1/TCF3 and TCF7L2/TCF4). May also play a role as a coactivator for androgen- and, to a lesser extent, progesterone-dependent transcription. This is E3 ubiquitin-protein ligase RNF14 from Mus musculus (Mouse).